The chain runs to 457 residues: MSINPDAPQSNGEQERQIAIWQLKRTIEKLESYTGSGTSVISLLIPPGEQLSSVTGMLTNEYGTASNIKSRVNKNAVLSAITSAMSRLKLYNRLPPNGLAVYCGEIEEDGKNTKVVIDYTPYKPISNFIYLCDSKFHTEHLRELLTNDDTFGFIIMDGKETLMATLSGTVRTILDRSTVDLPKKHGRGGQSSVRFARLREEARHNYVRKVAERANSLFISSGPTGTNKPIVSGLILGGSADFKNVLSTSAIFDQRLQSIVMKQIDINYGGEQGFNQAIEMAGDTLKDVKLIQEVKLLTEFTENIAKDTKRVCFGITDTIRCLEMSAVEKLIVWDDLPYHRVTLQCVINGETSAPVIKYLLKSQMSNPKYLREVINGEEVQLDIMGDQLLLEWFVDNYKNYGASLEFITNRSAEGTQFCSGFGGIGGLLRWQVDLVEAARFMQESDEDSFMDDLEDFI.

Belongs to the eukaryotic release factor 1 family. In terms of assembly, heterodimer of two subunits, one of which binds GTP.

The protein resides in the cytoplasm. In terms of biological role, directs the termination of nascent peptide synthesis (translation) in response to the termination codons UAA, UAG and UGA. The polypeptide is Eukaryotic peptide chain release factor subunit 1 (ERF1) (Giardia intestinalis (Giardia lamblia)).